We begin with the raw amino-acid sequence, 183 residues long: Probable calcium-binding protein CML47 (183 aa).

2 consecutive EF-hand domains span residues 112 to 147 and 149 to 183; these read MGKE…LGYD and CTKM…KSFS. Positions 125, 127, 129, 136, 162, 164, 166, 168, and 173 each coordinate Ca(2+).

Potential calcium sensor. This Arabidopsis thaliana (Mouse-ear cress) protein is Probable calcium-binding protein CML47 (CML47).